The sequence spans 639 residues: Uridine permease (639 aa).

Residues 1–37 (MPVSDSGFDNSSKTMKDDTIPTEDYEEITKESEMGDA) form a disordered region. Residues 1-162 (MPVSDSGFDN…LQLGLNWWQT (162 aa)) lie on the Cytoplasmic side of the membrane. Thr54 is subject to Phosphothreonine. Ser56 is subject to Phosphoserine. Residues 163–180 (WICIWVGYTFVAFFLILG) traverse the membrane as a helical segment. The Extracellular portion of the chain corresponds to 181–200 (SKVGNNYHISFPISSRVSFG). The chain crosses the membrane as a helical span at residues 201–225 (IYFSIWIVINRVVMACVWNSTLAYI). Residues 226 to 259 (GSQCVQLMLKAIFGTNLNTRIKDTIKNPNLTNFE) lie on the Cytoplasmic side of the membrane. Residues 260–276 (FMCFMVFWVACLPFLWF) traverse the membrane as a helical segment. Residues 277 to 283 (PPDKLRH) are Extracellular-facing. Residues 284 to 305 (IFALKSAITPFAAFGFLIWTLC) form a helical membrane-spanning segment. At 306 to 367 (KAKGHLALGS…KTYKSSVYSQ (62 aa)) the chain is on the cytoplasmic side. The helical transmembrane segment at 368-392 (LIALPVCYAIISLIGILSVSAAYTL) threads the bilayer. Over 393–416 (YGVNYWSPLDILNRYLDNYTSGNR) the chain is Extracellular. The helical transmembrane segment at 417-435 (AGVFLISFIFAFDQLGANL) threads the bilayer. Topologically, residues 436–460 (SGNSIPAGTDLTALLPKFINIRRGS) are cytoplasmic. A helical transmembrane segment spans residues 461–477 (YICALISLAICPWDLLS). Topologically, residues 478-483 (SSSKFT) are extracellular. Residues 484–507 (TALAAYAVFLSAIAGVISADYFIV) traverse the membrane as a helical segment. The Cytoplasmic portion of the chain corresponds to 508–537 (RKGYVNIFHCYTDKPGSYYMYNKYGTNWRA). A helical membrane pass occupies residues 538 to 562 (VVAYIFGIAPNFAGFLGSVGVSVPI). Over 563 to 572 (GAMKVYYLNY) the chain is Extracellular. The chain crosses the membrane as a helical span at residues 573–590 (FVGYLLAALSYCILVYFY). Topologically, residues 591–639 (PIKGIPGDAKITDRKWLEEWVEVEEFGTEREAFEEYGGVSTGYEKIRYI) are cytoplasmic. Lys635 participates in a covalent cross-link: Glycyl lysine isopeptide (Lys-Gly) (interchain with G-Cter in ubiquitin).

Belongs to the purine-cytosine permease (2.A.39) family.

The protein resides in the membrane. In terms of biological role, high-affinity transport of uridine. This chain is Uridine permease (FUI1), found in Saccharomyces cerevisiae (strain ATCC 204508 / S288c) (Baker's yeast).